A 57-amino-acid chain; its full sequence is Large ribosomal subunit protein bL32 (57 aa).

This sequence belongs to the bacterial ribosomal protein bL32 family.

The chain is Large ribosomal subunit protein bL32 from Staphylococcus saprophyticus subsp. saprophyticus (strain ATCC 15305 / DSM 20229 / NCIMB 8711 / NCTC 7292 / S-41).